An 817-amino-acid polypeptide reads, in one-letter code: Cargo-transport protein YPP1 (817 aa).

The protein belongs to the YPP1 family. Interacts with STT4 and ribosomes.

It is found in the cytoplasmic granule. It localises to the cell membrane. In terms of biological role, involved in endocytosis. This is Cargo-transport protein YPP1 (YPP1) from Saccharomyces cerevisiae (strain YJM789) (Baker's yeast).